A 181-amino-acid polypeptide reads, in one-letter code: Isopentenyl-diphosphate Delta-isomerase (181 aa).

Residues H25 and H32 each coordinate Mn(2+). The region spanning 30 to 164 is the Nudix hydrolase domain; sequence PLHLAFSCWL…PWAFSPWMVM (135 aa). C67 is a catalytic residue. Residue H69 participates in Mn(2+) binding. E87 serves as a coordination point for Mg(2+). Residues E114 and E116 each coordinate Mn(2+). The active site involves E116.

The protein belongs to the IPP isomerase type 1 family. In terms of assembly, homodimer. Requires Mg(2+) as cofactor. It depends on Mn(2+) as a cofactor.

It localises to the cytoplasm. It catalyses the reaction isopentenyl diphosphate = dimethylallyl diphosphate. Its pathway is isoprenoid biosynthesis; dimethylallyl diphosphate biosynthesis; dimethylallyl diphosphate from isopentenyl diphosphate: step 1/1. Catalyzes the 1,3-allylic rearrangement of the homoallylic substrate isopentenyl (IPP) to its highly electrophilic allylic isomer, dimethylallyl diphosphate (DMAPP). This chain is Isopentenyl-diphosphate Delta-isomerase, found in Salmonella paratyphi B (strain ATCC BAA-1250 / SPB7).